A 140-amino-acid chain; its full sequence is Chorion class A protein Ld2/Ld41 (140 aa).

Positions Met-1–Ser-21 are cleaved as a signal peptide.

It belongs to the chorion protein family.

This protein is one of many from the eggshell of the gypsy moth. In Lymantria dispar (Gypsy moth), this protein is Chorion class A protein Ld2/Ld41.